Here is a 544-residue protein sequence, read N- to C-terminus: Baeyer-Villiger monooxygenase (544 aa).

F27, E47, W56, D67, Y73, and V119 together coordinate FAD.

It belongs to the FAD-binding monooxygenase family. Requires FAD as cofactor.

Functionally, catalyzes a Baeyer-Villiger oxidation reaction, i.e. the insertion of an oxygen atom into a carbon-carbon bond adjacent to a carbonyl, which converts ketones to esters or lactones using NADPH as an electron donor. Besides cycloalkanones, can use cyclic alpha,beta-unsaturated ketones as substrates, leading to enol-lactones. Can also act on methylated cycloalkanones and methylated cycloalkenones with high enantioselectivity in some cases. This is Baeyer-Villiger monooxygenase from Parvibaculum lavamentivorans (strain DS-1 / DSM 13023 / NCIMB 13966).